The sequence spans 696 residues: Elongation factor G (696 aa).

Positions 8–290 constitute a tr-type G domain; that stretch reads ERYRNIGIMA…AVLDYLPSPL (283 aa). GTP-binding positions include 17 to 24, 88 to 92, and 142 to 145; these read AHIDAGKT, DTPGH, and NKMD.

This sequence belongs to the TRAFAC class translation factor GTPase superfamily. Classic translation factor GTPase family. EF-G/EF-2 subfamily.

It localises to the cytoplasm. Its function is as follows. Catalyzes the GTP-dependent ribosomal translocation step during translation elongation. During this step, the ribosome changes from the pre-translocational (PRE) to the post-translocational (POST) state as the newly formed A-site-bound peptidyl-tRNA and P-site-bound deacylated tRNA move to the P and E sites, respectively. Catalyzes the coordinated movement of the two tRNA molecules, the mRNA and conformational changes in the ribosome. The polypeptide is Elongation factor G (Nitrosomonas europaea (strain ATCC 19718 / CIP 103999 / KCTC 2705 / NBRC 14298)).